The sequence spans 1106 residues: Protein transport protein Sec31A (1106 aa).

WD repeat units lie at residues 4–47, 68–111, 120–160, 166–206, 209–254, 258–298, and 301–342; these read KEVD…EIFE, RYHK…AGDK, KHTG…TPMT, QPPE…PIIK, DHSN…SPLR, NHAR…VLYE, and TNTQ…DGLR. The tract at residues 161 to 471 is interaction with SEC13; the sequence is PGAKTQPPED…IDASQTEFEK (311 aa). One copy of the WD 8; interaction with SEC13 repeat lies at 397–430; sequence SFSFGGKLVTFENVRMPSHQGAEQQQQQHHVFIS. Phosphoserine occurs at positions 527 and 532. Lys-647 participates in a covalent cross-link: Glycyl lysine isopeptide (Lys-Gly) (interchain with G-Cter in ubiquitin). Phosphoserine is present on Ser-799. Positions 800–999 are interaction with PDCD6; that stretch reads PKIPYEEQQL…TKKITKKPIP (200 aa). The short motif at 842–848 is the ALG-2-binding site motif-2 (ABS-2) element; it reads GFIMHGN. Residues 859-980 form a disordered region; that stretch reads TSPGHMHTQV…EGAPGAPIGN (122 aa). Over residues 917–939 the composition is skewed to polar residues; sequence PQSQMLQQQPSAPVPLSSQSSFP. Thr-1047 is modified (phosphothreonine). Ser-1049 carries the phosphoserine modification. Residue Lys-1103 forms a Glycyl lysine isopeptide (Lys-Gly) (interchain with G-Cter in ubiquitin) linkage.

Belongs to the WD repeat SEC31 family. As to quaternary structure, COPII is composed of at least 5 proteins: the SEC23/24 complex, the SEC13/31 complex and SAR1. SEC13 and SEC31 make a 2:2 tetramer that forms the edge element of the COPII outer coat. The tetramer self-assembles in multiple copies to form the complete polyhedral cage. Interacts (via WD 8) with SEC13. Interacts with PDCD6; interaction takes place in response to cytosolic calcium increase and leads to bridge together the BCR(KLHL12) complex and SEC31A, leading to monoubiquitination. Interacts with KLHL12. In terms of processing, monoubiquitinated by the BCR(KLHL12) E3 ubiquitin ligase complex, leading to regulate the size of COPII coats.

It is found in the cytoplasm. It localises to the cytoplasmic vesicle. The protein localises to the COPII-coated vesicle membrane. Its subcellular location is the endoplasmic reticulum membrane. In terms of biological role, component of the coat protein complex II (COPII) which promotes the formation of transport vesicles from the endoplasmic reticulum (ER). The coat has two main functions, the physical deformation of the endoplasmic reticulum membrane into vesicles and the selection of cargo molecules. The protein is Protein transport protein Sec31A (SEC31A) of Pongo abelii (Sumatran orangutan).